A 445-amino-acid polypeptide reads, in one-letter code: Putative H/ACA ribonucleoprotein complex subunit 4 (445 aa).

Positions 1–32 (MGKKDKRSKLEGDDLAEAQQKGSFQLPSSNET) are disordered. A compositionally biased stretch (polar residues) spans 20 to 32 (QKGSFQLPSSNET). Asp-113 acts as the Nucleophile in catalysis. Residues 284–359 (HKRVVVKDSC…VVAKSKRVIM (76 aa)) enclose the PUA domain. The interval 386–445 (LDKFGKPNDTTPKSWAKEYVQTSTKKEVKKEETPDEEEEEAPKKKSKKSKKQESSDSDSD) is disordered.

This sequence belongs to the pseudouridine synthase TruB family. Component of the small nucleolar ribonucleoprotein particle containing H/ACA-type snoRNAs (H/ACA snoRNPs).

The protein resides in the nucleus. It is found in the nucleolus. The catalysed reaction is a uridine in RNA = a pseudouridine in RNA. Functionally, plays a central role in ribosomal RNA processing. Probable catalytic subunit of H/ACA small nucleolar ribonucleoprotein (H/ACA snoRNP) complex, which catalyzes pseudouridylation of rRNA. This involves the isomerization of uridine such that the ribose is subsequently attached to C5, instead of the normal N1. Pseudouridine ('psi') residues may serve to stabilize the conformation of rRNAs. This Caenorhabditis elegans protein is Putative H/ACA ribonucleoprotein complex subunit 4.